We begin with the raw amino-acid sequence, 364 residues long: Ribosomal RNA large subunit methyltransferase F (364 aa).

The span at 1–17 (MPKPAIKTAAKPATSSA) shows a compositional bias: low complexity. Residues 1 to 53 (MPKPAIKTAAKPATSSAGKRGKPNTPKSVAKPKTAKPKTASKPKVKPGEKKRL) form a disordered region. The segment covering 33–53 (KTAKPKTASKPKVKPGEKKRL) has biased composition (basic residues).

This sequence belongs to the methyltransferase superfamily. METTL16/RlmF family.

The protein resides in the cytoplasm. It catalyses the reaction adenosine(1618) in 23S rRNA + S-adenosyl-L-methionine = N(6)-methyladenosine(1618) in 23S rRNA + S-adenosyl-L-homocysteine + H(+). Specifically methylates the adenine in position 1618 of 23S rRNA. The sequence is that of Ribosomal RNA large subunit methyltransferase F from Shewanella sp. (strain MR-7).